We begin with the raw amino-acid sequence, 239 residues long: tRNA (guanine-N(7)-)-methyltransferase (239 aa).

S-adenosyl-L-methionine is bound by residues Glu69, Glu94, Asp121, and Asp144. Residue Asp144 is part of the active site. Substrate contacts are provided by residues Lys148, Asp180, and 217 to 220 (TNFE).

The protein belongs to the class I-like SAM-binding methyltransferase superfamily. TrmB family. Monomer.

The catalysed reaction is guanosine(46) in tRNA + S-adenosyl-L-methionine = N(7)-methylguanosine(46) in tRNA + S-adenosyl-L-homocysteine. Its pathway is tRNA modification; N(7)-methylguanine-tRNA biosynthesis. Catalyzes the formation of N(7)-methylguanine at position 46 (m7G46) in tRNA. This chain is tRNA (guanine-N(7)-)-methyltransferase, found in Buchnera aphidicola subsp. Schizaphis graminum (strain Sg).